A 288-amino-acid chain; its full sequence is Ribosomal protein L11 methyltransferase (288 aa).

S-adenosyl-L-methionine contacts are provided by Thr-134, Gly-157, Asp-179, and Asn-224.

It belongs to the methyltransferase superfamily. PrmA family.

The protein localises to the cytoplasm. The catalysed reaction is L-lysyl-[protein] + 3 S-adenosyl-L-methionine = N(6),N(6),N(6)-trimethyl-L-lysyl-[protein] + 3 S-adenosyl-L-homocysteine + 3 H(+). In terms of biological role, methylates ribosomal protein L11. The polypeptide is Ribosomal protein L11 methyltransferase (Caulobacter sp. (strain K31)).